A 91-amino-acid polypeptide reads, in one-letter code: MNVKAIAKQMPITPRKTRLVADLIRGKNIKEAQAILMFTPKSASPIVLKLLKSAIANATNNFSLDDKNLYVKEIFVNEGLRLTRLFPRAKG.

Belongs to the universal ribosomal protein uL22 family. As to quaternary structure, part of the 50S ribosomal subunit.

This protein binds specifically to 23S rRNA; its binding is stimulated by other ribosomal proteins, e.g. L4, L17, and L20. It is important during the early stages of 50S assembly. It makes multiple contacts with different domains of the 23S rRNA in the assembled 50S subunit and ribosome. In terms of biological role, the globular domain of the protein is located near the polypeptide exit tunnel on the outside of the subunit, while an extended beta-hairpin is found that lines the wall of the exit tunnel in the center of the 70S ribosome. The sequence is that of Large ribosomal subunit protein uL22 (rplV) from Pigeon pea witches'-broom phytoplasma.